Here is a 686-residue protein sequence, read N- to C-terminus: Chondroitin proteoglycan 1 (686 aa).

A signal peptide spans 1-18 (MLPKSVLIVAFLVASSSA). N-linked (GlcNAc...) asparagine glycosylation is present at asparagine 46. Residues 63–120 (DTDCSTKEDGLYAIGGCSPQFLTCSGGIARIMDCPANLIYDQRIIACEYSYNVPECSG) enclose the Chitin-binding type-2 1 domain. Cysteine 96 and cysteine 109 are oxidised to a cystine. Residue asparagine 143 is glycosylated (N-linked (GlcNAc...) asparagine). In terms of domain architecture, Chitin-binding type-2 2 spans 228-285 (DKTCNGKADGFYSFGQCSDHYIACSNGYTIPMQCPARLSFDEARVICDYTMNVPECQN). A disulfide bond links cysteine 261 and cysteine 274. Positions 284–312 (QNGSGNYEGSAEETTTEASGELPYSNGYG) are disordered. 3 N-linked (GlcNAc...) asparagine glycosylation sites follow: asparagine 285, asparagine 635, and asparagine 664. The segment at 658–686 (KLRSATNRTSTKEATTRTQNMHAHYHRNH) is disordered.

In terms of biological role, required for polar body extrusion during cytokinesis in embryo development. Affects cortical granule size. Shown to have roles in meiotic chromosome segregation, osmotic barrier function and polarization in conjunction with cpg-2. Binds chitin. The polypeptide is Chondroitin proteoglycan 1 (cpg-1) (Caenorhabditis briggsae).